Here is a 761-residue protein sequence, read N- to C-terminus: Ribonucleoside-diphosphate reductase subunit alpha (761 aa).

Positions 5 to 95 (LFVTKRNGKI…IFHLRKKAFG (91 aa)) constitute an ATP-cone domain. ATP contacts are provided by residues Lys-9, 15 to 21 (ELINLDK), Thr-55, and Lys-91. Thr-209 serves as a coordination point for GDP. A disulfide bond links Cys-225 and Cys-462. Residues 232-234 (DNL), Arg-262, and Arg-269 each bind dTTP. Asn-437 contacts GDP. Asn-437 (proton acceptor) is an active-site residue. The active-site Cysteine radical intermediate is Cys-439. GDP contacts are provided by residues Glu-441 and 623–625 (ETS). Glu-441 functions as the Proton acceptor in the catalytic mechanism.

The protein belongs to the ribonucleoside diphosphate reductase large chain family. As to quaternary structure, tetramer of two alpha and two beta subunits.

The catalysed reaction is a 2'-deoxyribonucleoside 5'-diphosphate + [thioredoxin]-disulfide + H2O = a ribonucleoside 5'-diphosphate + [thioredoxin]-dithiol. Under complex allosteric control mediated by deoxynucleoside triphosphates and ATP binding to separate specificity and activation sites on the alpha subunit. The type of nucleotide bound at the specificity site determines substrate preference. It seems probable that ATP makes the enzyme reduce CDP and UDP, dGTP favors ADP reduction and dTTP favors GDP reduction. Stimulated by ATP and inhibited by dATP binding to the activity site. In terms of biological role, provides the precursors necessary for DNA synthesis. Catalyzes the biosynthesis of deoxyribonucleotides from the corresponding ribonucleotides. The sequence is that of Ribonucleoside-diphosphate reductase subunit alpha (nrdA) from Buchnera aphidicola subsp. Baizongia pistaciae (strain Bp).